We begin with the raw amino-acid sequence, 247 residues long: Probable 2-phosphosulfolactate phosphatase (247 aa).

This sequence belongs to the ComB family. Requires Mg(2+) as cofactor.

It carries out the reaction (2R)-O-phospho-3-sulfolactate + H2O = (2R)-3-sulfolactate + phosphate. This Clostridium perfringens (strain 13 / Type A) protein is Probable 2-phosphosulfolactate phosphatase.